A 293-amino-acid polypeptide reads, in one-letter code: Bifunctional protein FolD (293 aa).

Residues G165–G167, T192, and V233 contribute to the NADP(+) site.

This sequence belongs to the tetrahydrofolate dehydrogenase/cyclohydrolase family. As to quaternary structure, homodimer.

The catalysed reaction is (6R)-5,10-methylene-5,6,7,8-tetrahydrofolate + NADP(+) = (6R)-5,10-methenyltetrahydrofolate + NADPH. The enzyme catalyses (6R)-5,10-methenyltetrahydrofolate + H2O = (6R)-10-formyltetrahydrofolate + H(+). It functions in the pathway one-carbon metabolism; tetrahydrofolate interconversion. Catalyzes the oxidation of 5,10-methylenetetrahydrofolate to 5,10-methenyltetrahydrofolate and then the hydrolysis of 5,10-methenyltetrahydrofolate to 10-formyltetrahydrofolate. This Streptomyces griseus subsp. griseus (strain JCM 4626 / CBS 651.72 / NBRC 13350 / KCC S-0626 / ISP 5235) protein is Bifunctional protein FolD.